The sequence spans 433 residues: Glutamate-1-semialdehyde 2,1-aminomutase (433 aa).

The residue at position 272 (Lys-272) is an N6-(pyridoxal phosphate)lysine.

The protein belongs to the class-III pyridoxal-phosphate-dependent aminotransferase family. HemL subfamily. As to quaternary structure, homodimer. Pyridoxal 5'-phosphate is required as a cofactor.

It is found in the cytoplasm. The catalysed reaction is (S)-4-amino-5-oxopentanoate = 5-aminolevulinate. The protein operates within porphyrin-containing compound metabolism; protoporphyrin-IX biosynthesis; 5-aminolevulinate from L-glutamyl-tRNA(Glu): step 2/2. It participates in porphyrin-containing compound metabolism; chlorophyll biosynthesis. The chain is Glutamate-1-semialdehyde 2,1-aminomutase from Synechococcus sp. (strain WH7803).